Here is a 44-residue protein sequence, read N- to C-terminus: U4-ctenitoxin-Co1a (44 aa).

4 disulfide bridges follow: cysteine 2–cysteine 19, cysteine 9–cysteine 25, cysteine 18–cysteine 39, and cysteine 27–cysteine 37.

Expressed by the venom gland.

It localises to the secreted. Its function is as follows. Omega-agatoxins are antagonists of voltage-gated calcium channels (Cav). Toxic to mice by intracerebroventricular injection. This Ctenus ornatus (Brazilian spider) protein is U4-ctenitoxin-Co1a.